The following is a 284-amino-acid chain: Trimeric intracellular cation channel type B-A (284 aa).

Residues 1–15 are Lumenal-facing; that stretch reads MESLSELSVQFSQLS. A helical membrane pass occupies residues 16–33; that stretch reads MFPFFDMAHYVVSVMSAR. Residues 34–46 are Cytoplasmic-facing; the sequence is EQAGALDIAARSP. Residues 47 to 68 form a helical membrane-spanning segment; sequence MASWFSAMLYCFGGGILSSILL. Topologically, residues 69 to 79 are lumenal; the sequence is AEPPIAVLSNT. Residues 80–99 form a helical membrane-spanning segment; the sequence is TNIMLASTIWYMVYYFPYDL. The Cytoplasmic segment spans residues 100–102; it reads FYN. Residues 103 to 121 form a helical membrane-spanning segment; that stretch reads CFFFLPIRLIIAGMKEVTR. Positions 117 and 121 each coordinate a 1,2-diacyl-sn-glycero-3-phospho-(1D-myo-inositol-4,5-bisphosphate). Over 122-137 the chain is Lumenal; that stretch reads TWKILSGVTHAHSHYK. Residues 138-155 form a helical membrane-spanning segment; it reads DALLVMITIGWARGAGGG. Residues 156–177 are Cytoplasmic-facing; that stretch reads LISNFEQLVRGVWKPESNEFLK. A helical membrane pass occupies residues 178 to 195; the sequence is MSYPVKVTLIGAVLFTLQ. The Lumenal portion of the chain corresponds to 196-206; sequence HGHYLPISRHN. A helical transmembrane segment spans residues 207 to 224; the sequence is LMLIYTMFLVLIKVTMML. The Cytoplasmic segment spans residues 225–284; it reads THSTASPFLPLETPLQRILFGQRQKPSEVRQSASSSGAKGKPSKKTLDKDSGEQSKKKDS. The interval 246–284 is disordered; that stretch reads QRQKPSEVRQSASSSGAKGKPSKKTLDKDSGEQSKKKDS. Basic and acidic residues predominate over residues 269 to 284; it reads KTLDKDSGEQSKKKDS.

This sequence belongs to the TMEM38 family. As to quaternary structure, homotrimer; conformation seems to be controled by binding to diacylglycerol (DAG).

The protein resides in the endoplasmic reticulum membrane. The enzyme catalyses K(+)(in) = K(+)(out). With respect to regulation, channel activity is activated by increased cytosolic Ca(2+) levels and blocked by luminal high Ca(2+) levels. Its function is as follows. Intracellular monovalent cation channel required for maintenance of rapid intracellular calcium release. Acts as a potassium counter-ion channel that functions in synchronization with calcium release from intracellular stores. Activated by increased cytosolic Ca(2+) levels. This chain is Trimeric intracellular cation channel type B-A (tmem38b-a), found in Xenopus laevis (African clawed frog).